Here is a 306-residue protein sequence, read N- to C-terminus: uncharacterized protein (306 aa).

This sequence to M.tuberculosis Rv1486c, M.bovis Mb1522c and M.leprae ML1804.

This is an uncharacterized protein from Mycobacterium avium.